The primary structure comprises 157 residues: Class I hydrophobin rodA (157 aa).

The signal sequence occupies residues 1 to 41 (MKFSIAAAVVAFAASVAALPPAHDSQFAGNGVGNKGNSNVK). The N-linked (GlcNAc...) asparagine glycan is linked to N47. Intrachain disulfides connect C57/C131, C65/C125, C66/C106, and C132/C150.

The protein belongs to the fungal hydrophobin family. Self-assembles to form functional amyloid fibrils called rodlets. Self-assembly into fibrillar rodlets occurs spontaneously at hydrophobic:hydrophilic interfaces and the rodlets further associate laterally to form amphipathic monolayers.

The protein resides in the secreted. It localises to the spore wall. Its function is as follows. Aerial growth, conidiation, and dispersal of filamentous fungi in the environment rely upon a capability of their secreting small amphipathic proteins called hydrophobins (HPBs) with low sequence identity. Class I can self-assemble into an outermost layer of rodlet bundles on aerial cell surfaces, conferring cellular hydrophobicity that supports fungal growth, development and dispersal; whereas Class II form highly ordered films at water-air interfaces through intermolecular interactions but contribute nothing to the rodlet structure. RodA is a class I hydrophobin that contributes to surface hydrophobicity, which is important for processes such as association of hyphae in reproductive structures, dispersal of aerial spores and adhesion of pathogens to host structures. Important for the formation of hydrophobic rodlet layers of asexually-produced spores. Promotes also biofilm formation and may enhance lignocellulose utilization via promoting a compact substrate-enzyme-fungus structure. The sequence is that of Class I hydrophobin rodA from Emericella nidulans (strain FGSC A4 / ATCC 38163 / CBS 112.46 / NRRL 194 / M139) (Aspergillus nidulans).